Consider the following 236-residue polypeptide: 5'-methylthioadenosine/S-adenosylhomocysteine nucleosidase (236 aa).

The Proton acceptor role is filled by glutamate 12. Residues glycine 78, isoleucine 153, and 174-175 (ME) contribute to the substrate site. The active-site Proton donor is aspartate 198.

The protein belongs to the PNP/UDP phosphorylase family. MtnN subfamily.

The enzyme catalyses S-adenosyl-L-homocysteine + H2O = S-(5-deoxy-D-ribos-5-yl)-L-homocysteine + adenine. The catalysed reaction is S-methyl-5'-thioadenosine + H2O = 5-(methylsulfanyl)-D-ribose + adenine. It carries out the reaction 5'-deoxyadenosine + H2O = 5-deoxy-D-ribose + adenine. It participates in amino-acid biosynthesis; L-methionine biosynthesis via salvage pathway; S-methyl-5-thio-alpha-D-ribose 1-phosphate from S-methyl-5'-thioadenosine (hydrolase route): step 1/2. Catalyzes the irreversible cleavage of the glycosidic bond in both 5'-methylthioadenosine (MTA) and S-adenosylhomocysteine (SAH/AdoHcy) to adenine and the corresponding thioribose, 5'-methylthioribose and S-ribosylhomocysteine, respectively. Also cleaves 5'-deoxyadenosine, a toxic by-product of radical S-adenosylmethionine (SAM) enzymes, into 5-deoxyribose and adenine. This is 5'-methylthioadenosine/S-adenosylhomocysteine nucleosidase from Shewanella sp. (strain MR-7).